The following is a 951-amino-acid chain: Protein inturned (951 aa).

Disordered regions lie at residues 1-32 (MEHS…FSSS), 189-208 (SSRN…NQRL), and 687-765 (TPKR…GGSG). The region spanning 187–269 (HQSSRNSKRS…PMQLKLTFET (83 aa)) is the PDZ domain. Over residues 715-726 (PTRSSGGSDSGT) the composition is skewed to low complexity. A compositionally biased stretch (basic and acidic residues) spans 743 to 752 (MARKFGRRES). The segment covering 754 to 765 (GSGGSDGSGGSG) has biased composition (gly residues).

The protein belongs to the inturned family. In terms of assembly, interacts with fuz and wdpcp; fuz, intu and wdpcp probably form the core CPLANE (ciliogenesis and planar polarity effectors) complex. In terms of tissue distribution, expressed in the neural plate during neural tube closure with subsequent strong expression in the ventral neural tube and in facial mesenchyme.

It localises to the cell surface. The protein localises to the cell membrane. Its subcellular location is the cytoplasm. The protein resides in the cytoskeleton. It is found in the cilium basal body. In terms of biological role, plays a role in the definition of cell polarity via the planar cell polarity (PCP) cascade. Required for ciliogenesis by controlling the organization of the apical actin cytoskeleton and the positioning of the basal bodies at the apical cell surface, which in turn is essential for the normal orientation of elongating ciliary microtubules. Proposed to function as core component of a functional module called CPLANE (ciliogenesis and planar polarity effectors) involved in recruitment of peripheral IFT-A proteins to basal bodies. Controls the localization of both rhoa and disheveled in multi-ciliated cells. Has an indirect effect on hedgehog signaling. The protein is Protein inturned of Xenopus laevis (African clawed frog).